The following is a 153-amino-acid chain: UPF0266 membrane protein YPTB1631 (153 aa).

3 helical membrane passes run 6-26, 45-65, and 67-87; these read LVLVVFIALLLIYAIYDEFIM, LDCMIFVGLIGILIYNNVMAH, and APLTTYLLVGLALVAVYISYI.

This sequence belongs to the UPF0266 family.

It localises to the cell inner membrane. This chain is UPF0266 membrane protein YPTB1631, found in Yersinia pseudotuberculosis serotype I (strain IP32953).